The chain runs to 648 residues: Macrolide export ATP-binding/permease protein MacB (648 aa).

An ABC transporter domain is found at 5–243 (LELKDIRRSY…AGGTEPVVNT (239 aa)). 41–48 (GASGSGKS) contributes to the ATP binding site. Transmembrane regions (helical) follow at residues 273–293 (LLTMLGIIIGIASVVSIVVVG), 523–543 (LFLTLVAVISLVVGGIGVMNI), 576–596 (AVLVCLVGGALGITLSLLIAF), and 600–620 (LFLPGWEIGFSPLALLLAFLC).

It belongs to the ABC transporter superfamily. Macrolide exporter (TC 3.A.1.122) family. As to quaternary structure, homodimer. Part of the tripartite efflux system MacAB-TolC, which is composed of an inner membrane transporter, MacB, a periplasmic membrane fusion protein, MacA, and an outer membrane component, TolC. The complex forms a large protein conduit and can translocate molecules across both the inner and outer membranes. Interacts with MacA.

The protein localises to the cell inner membrane. Functionally, part of the tripartite efflux system MacAB-TolC. MacB is a non-canonical ABC transporter that contains transmembrane domains (TMD), which form a pore in the inner membrane, and an ATP-binding domain (NBD), which is responsible for energy generation. Confers resistance against macrolides. The protein is Macrolide export ATP-binding/permease protein MacB of Shigella boydii serotype 4 (strain Sb227).